The following is a 330-amino-acid chain: Methionyl-tRNA formyltransferase (330 aa).

121-124 (SLLP) is a binding site for (6S)-5,6,7,8-tetrahydrofolate.

It belongs to the Fmt family.

It carries out the reaction L-methionyl-tRNA(fMet) + (6R)-10-formyltetrahydrofolate = N-formyl-L-methionyl-tRNA(fMet) + (6S)-5,6,7,8-tetrahydrofolate + H(+). Its function is as follows. Attaches a formyl group to the free amino group of methionyl-tRNA(fMet). The formyl group appears to play a dual role in the initiator identity of N-formylmethionyl-tRNA by promoting its recognition by IF2 and preventing the misappropriation of this tRNA by the elongation apparatus. In Burkholderia cenocepacia (strain ATCC BAA-245 / DSM 16553 / LMG 16656 / NCTC 13227 / J2315 / CF5610) (Burkholderia cepacia (strain J2315)), this protein is Methionyl-tRNA formyltransferase.